A 322-amino-acid chain; its full sequence is HPr kinase/phosphorylase (322 aa).

Residues His-143 and Lys-164 contribute to the active site. ATP is bound at residue 158 to 165 (GRSGVGKS). Ser-165 lines the Mg(2+) pocket. The active-site Proton acceptor; for phosphorylation activity. Proton donor; for dephosphorylation activity is the Asp-182. Residues 206-215 (MEIRGLGILN) form an important for the catalytic mechanism of both phosphorylation and dephosphorylation region. Glu-207 lines the Mg(2+) pocket. The active site involves Arg-250. Positions 271-276 (PVKPGR) are important for the catalytic mechanism of dephosphorylation.

The protein belongs to the HPrK/P family. As to quaternary structure, homohexamer. Mg(2+) is required as a cofactor.

The enzyme catalyses [HPr protein]-L-serine + ATP = [HPr protein]-O-phospho-L-serine + ADP + H(+). The catalysed reaction is [HPr protein]-O-phospho-L-serine + phosphate + H(+) = [HPr protein]-L-serine + diphosphate. Catalyzes the ATP- as well as the pyrophosphate-dependent phosphorylation of a specific serine residue in HPr, a phosphocarrier protein of the phosphoenolpyruvate-dependent sugar phosphotransferase system (PTS). HprK/P also catalyzes the pyrophosphate-producing, inorganic phosphate-dependent dephosphorylation (phosphorolysis) of seryl-phosphorylated HPr (P-Ser-HPr). This chain is HPr kinase/phosphorylase, found in Leptospira biflexa serovar Patoc (strain Patoc 1 / Ames).